The following is a 257-amino-acid chain: UPF0246 protein CLH_2088 (257 aa).

This sequence belongs to the UPF0246 family.

In Clostridium botulinum (strain Alaska E43 / Type E3), this protein is UPF0246 protein CLH_2088.